The chain runs to 235 residues: Ubiquinone biosynthesis O-methyltransferase (235 aa).

4 residues coordinate S-adenosyl-L-methionine: Arg40, Gly60, Asp81, and Met125.

This sequence belongs to the methyltransferase superfamily. UbiG/COQ3 family.

The enzyme catalyses a 3-demethylubiquinol + S-adenosyl-L-methionine = a ubiquinol + S-adenosyl-L-homocysteine + H(+). It carries out the reaction a 3-(all-trans-polyprenyl)benzene-1,2-diol + S-adenosyl-L-methionine = a 2-methoxy-6-(all-trans-polyprenyl)phenol + S-adenosyl-L-homocysteine + H(+). Its pathway is cofactor biosynthesis; ubiquinone biosynthesis. Functionally, O-methyltransferase that catalyzes the 2 O-methylation steps in the ubiquinone biosynthetic pathway. The chain is Ubiquinone biosynthesis O-methyltransferase from Nitrosomonas europaea (strain ATCC 19718 / CIP 103999 / KCTC 2705 / NBRC 14298).